Here is a 430-residue protein sequence, read N- to C-terminus: GTPase Obg (430 aa).

The Obg domain occupies Met1–Leu158. The segment at Lys118–Pro145 is disordered. Positions Ala159–Glu329 constitute an OBG-type G domain. GTP is bound by residues Gly165–Ser172, Phe190–Lys194, Asp212–Gly215, Asn282–Asp285, and Ser310–Ile312. Mg(2+) is bound by residues Ser172 and Thr192. Positions Lys352 to Glu430 constitute an OCT domain.

Belongs to the TRAFAC class OBG-HflX-like GTPase superfamily. OBG GTPase family. Monomer. Mg(2+) is required as a cofactor.

The protein resides in the cytoplasm. In terms of biological role, an essential GTPase which binds GTP, GDP and possibly (p)ppGpp with moderate affinity, with high nucleotide exchange rates and a fairly low GTP hydrolysis rate. Plays a role in control of the cell cycle, stress response, ribosome biogenesis and in those bacteria that undergo differentiation, in morphogenesis control. The chain is GTPase Obg from Staphylococcus aureus (strain MRSA252).